The primary structure comprises 201 residues: Glycerol-3-phosphate acyltransferase (201 aa).

5 helical membrane passes run 10–30, 59–79, 87–107, 116–136, and 161–181; these read ALIL…GIVI, PAAL…VLIA, AAQL…WLGF, FLGT…LTWL, and ILLG…LIFI.

The protein belongs to the PlsY family. Probably interacts with PlsX.

It is found in the cell inner membrane. It carries out the reaction an acyl phosphate + sn-glycerol 3-phosphate = a 1-acyl-sn-glycero-3-phosphate + phosphate. It functions in the pathway lipid metabolism; phospholipid metabolism. Functionally, catalyzes the transfer of an acyl group from acyl-phosphate (acyl-PO(4)) to glycerol-3-phosphate (G3P) to form lysophosphatidic acid (LPA). This enzyme utilizes acyl-phosphate as fatty acyl donor, but not acyl-CoA or acyl-ACP. This chain is Glycerol-3-phosphate acyltransferase, found in Cereibacter sphaeroides (strain ATCC 17029 / ATH 2.4.9) (Rhodobacter sphaeroides).